The sequence spans 512 residues: 2,3-bisphosphoglycerate-independent phosphoglycerate mutase (512 aa).

Positions 12 and 62 each coordinate Mn(2+). Catalysis depends on S62, which acts as the Phosphoserine intermediate. Residues H123, 154–155 (RD), R181, R187, 253–256 (RPDR), and K336 contribute to the substrate site. Mn(2+) contacts are provided by D403, H407, D444, H445, and H462.

It belongs to the BPG-independent phosphoglycerate mutase family. In terms of assembly, monomer. It depends on Mn(2+) as a cofactor.

The catalysed reaction is (2R)-2-phosphoglycerate = (2R)-3-phosphoglycerate. It participates in carbohydrate degradation; glycolysis; pyruvate from D-glyceraldehyde 3-phosphate: step 3/5. Functionally, catalyzes the interconversion of 2-phosphoglycerate and 3-phosphoglycerate. This is 2,3-bisphosphoglycerate-independent phosphoglycerate mutase from Aster yellows witches'-broom phytoplasma (strain AYWB).